The following is a 241-amino-acid chain: Small ribosomal subunit protein uS2 (241 aa).

It belongs to the universal ribosomal protein uS2 family.

This chain is Small ribosomal subunit protein uS2, found in Enterobacter sp. (strain 638).